The chain runs to 422 residues: Phosphoribosylamine--glycine ligase (422 aa).

An ATP-grasp domain is found at Lys107–Thr312. Pro138–Ser193 contributes to the ATP binding site. Mg(2+) is bound by residues Glu282 and Asn284.

It belongs to the GARS family. The cofactor is Mg(2+). Mn(2+) serves as cofactor.

It carries out the reaction 5-phospho-beta-D-ribosylamine + glycine + ATP = N(1)-(5-phospho-beta-D-ribosyl)glycinamide + ADP + phosphate + H(+). Its pathway is purine metabolism; IMP biosynthesis via de novo pathway; N(1)-(5-phospho-D-ribosyl)glycinamide from 5-phospho-alpha-D-ribose 1-diphosphate: step 2/2. This is Phosphoribosylamine--glycine ligase from Mycobacterium leprae (strain TN).